A 285-amino-acid chain; its full sequence is NADPH-dependent 7-cyano-7-deazaguanine reductase (285 aa).

Residue Ile-91–Ser-93 coordinates substrate. Ser-93–Lys-94 contacts NADPH. Cys-191 functions as the Thioimide intermediate in the catalytic mechanism. Asp-198 serves as the catalytic Proton donor. His-230 to Glu-231 contributes to the substrate binding site. Arg-259–Gly-260 serves as a coordination point for NADPH.

The protein belongs to the GTP cyclohydrolase I family. QueF type 2 subfamily. As to quaternary structure, homodimer.

The protein resides in the cytoplasm. It carries out the reaction 7-aminomethyl-7-carbaguanine + 2 NADP(+) = 7-cyano-7-deazaguanine + 2 NADPH + 3 H(+). It functions in the pathway tRNA modification; tRNA-queuosine biosynthesis. Functionally, catalyzes the NADPH-dependent reduction of 7-cyano-7-deazaguanine (preQ0) to 7-aminomethyl-7-deazaguanine (preQ1). This chain is NADPH-dependent 7-cyano-7-deazaguanine reductase, found in Legionella pneumophila (strain Paris).